A 650-amino-acid chain; its full sequence is Acetyl-coenzyme A synthetase (650 aa).

CoA is bound by residues 191–194, T311, and N335; that span reads RAGR. ATP contacts are provided by residues 387 to 389, 411 to 416, D500, and R515; these read GEP and DTWWQT. S523 contacts CoA. R526 contacts ATP. Mg(2+) contacts are provided by V537, H539, and V542. R584 lines the CoA pocket. At K609 the chain carries N6-acetyllysine.

This sequence belongs to the ATP-dependent AMP-binding enzyme family. Mg(2+) is required as a cofactor. In terms of processing, acetylated. Deacetylation by the SIR2-homolog deacetylase activates the enzyme.

The enzyme catalyses acetate + ATP + CoA = acetyl-CoA + AMP + diphosphate. In terms of biological role, catalyzes the conversion of acetate into acetyl-CoA (AcCoA), an essential intermediate at the junction of anabolic and catabolic pathways. AcsA undergoes a two-step reaction. In the first half reaction, AcsA combines acetate with ATP to form acetyl-adenylate (AcAMP) intermediate. In the second half reaction, it can then transfer the acetyl group from AcAMP to the sulfhydryl group of CoA, forming the product AcCoA. The sequence is that of Acetyl-coenzyme A synthetase from Shewanella halifaxensis (strain HAW-EB4).